A 37-amino-acid polypeptide reads, in one-letter code: Cytochrome b6-f complex subunit 5 (37 aa).

A helical membrane pass occupies residues 5-25 (LLSGIVLGMITVSALGLFVAA).

Belongs to the PetG family. In terms of assembly, the 4 large subunits of the cytochrome b6-f complex are cytochrome b6, subunit IV (17 kDa polypeptide, PetD), cytochrome f and the Rieske protein, while the 4 small subunits are PetG, PetL, PetM and PetN. The complex functions as a dimer.

It localises to the plastid. Its subcellular location is the chloroplast thylakoid membrane. Component of the cytochrome b6-f complex, which mediates electron transfer between photosystem II (PSII) and photosystem I (PSI), cyclic electron flow around PSI, and state transitions. PetG is required for either the stability or assembly of the cytochrome b6-f complex. This is Cytochrome b6-f complex subunit 5 from Trieres chinensis (Marine centric diatom).